We begin with the raw amino-acid sequence, 344 residues long: Protein pelota homolog (344 aa).

It belongs to the eukaryotic release factor 1 family. Pelota subfamily. In terms of assembly, monomer. Requires a divalent metal cation as cofactor.

It localises to the cytoplasm. In terms of biological role, may function in recognizing stalled ribosomes, interact with stem-loop structures in stalled mRNA molecules, and effect endonucleolytic cleavage of the mRNA. May play a role in the release non-functional ribosomes and degradation of damaged mRNAs. Has endoribonuclease activity. The chain is Protein pelota homolog from Saccharolobus islandicus (strain M.14.25 / Kamchatka #1) (Sulfolobus islandicus).